The chain runs to 511 residues: Membrane-bound lytic murein transglycosylase F (511 aa).

An N-terminal signal peptide occupies residues 1 to 19 (MKKLKINYLLIGIVTLLLA). The interval 20–269 (AALWPSIPWS…RLEEKYLGHG (250 aa)) is non-LT domain. The tract at residues 270-511 (NDFDYVDTRT…ARMKLPGHLY (242 aa)) is LT domain. Residue glutamate 314 is part of the active site.

It in the N-terminal section; belongs to the bacterial solute-binding protein 3 family. In the C-terminal section; belongs to the transglycosylase Slt family.

The protein resides in the cell outer membrane. The catalysed reaction is Exolytic cleavage of the (1-&gt;4)-beta-glycosidic linkage between N-acetylmuramic acid (MurNAc) and N-acetylglucosamine (GlcNAc) residues in peptidoglycan, from either the reducing or the non-reducing ends of the peptidoglycan chains, with concomitant formation of a 1,6-anhydrobond in the MurNAc residue.. Functionally, murein-degrading enzyme that degrades murein glycan strands and insoluble, high-molecular weight murein sacculi, with the concomitant formation of a 1,6-anhydromuramoyl product. Lytic transglycosylases (LTs) play an integral role in the metabolism of the peptidoglycan (PG) sacculus. Their lytic action creates space within the PG sacculus to allow for its expansion as well as for the insertion of various structures such as secretion systems and flagella. This chain is Membrane-bound lytic murein transglycosylase F, found in Klebsiella pneumoniae subsp. pneumoniae (strain ATCC 700721 / MGH 78578).